The sequence spans 293 residues: Ribosomal protein L11 methyltransferase (293 aa).

Residues Thr145, Gly166, Asp188, and Asn230 each contribute to the S-adenosyl-L-methionine site.

It belongs to the methyltransferase superfamily. PrmA family.

The protein localises to the cytoplasm. It catalyses the reaction L-lysyl-[protein] + 3 S-adenosyl-L-methionine = N(6),N(6),N(6)-trimethyl-L-lysyl-[protein] + 3 S-adenosyl-L-homocysteine + 3 H(+). Functionally, methylates ribosomal protein L11. This chain is Ribosomal protein L11 methyltransferase, found in Salmonella dublin (strain CT_02021853).